Reading from the N-terminus, the 297-residue chain is Ribosomal protein L11 methyltransferase (297 aa).

The S-adenosyl-L-methionine site is built by Thr152, Gly173, Asp195, and Asn234.

This sequence belongs to the methyltransferase superfamily. PrmA family.

It is found in the cytoplasm. It catalyses the reaction L-lysyl-[protein] + 3 S-adenosyl-L-methionine = N(6),N(6),N(6)-trimethyl-L-lysyl-[protein] + 3 S-adenosyl-L-homocysteine + 3 H(+). Its function is as follows. Methylates ribosomal protein L11. The chain is Ribosomal protein L11 methyltransferase from Cupriavidus taiwanensis (strain DSM 17343 / BCRC 17206 / CCUG 44338 / CIP 107171 / LMG 19424 / R1) (Ralstonia taiwanensis (strain LMG 19424)).